A 223-amino-acid polypeptide reads, in one-letter code: Thymidine kinase (223 aa).

Residues 19–26 (GPMFAGKT) and 96–99 (DEVQ) contribute to the ATP site. The Proton acceptor role is filled by Glu97. Zn(2+) is bound by residues Cys153, Cys156, Cys191, and His194.

Belongs to the thymidine kinase family. Homotetramer.

Its subcellular location is the cytoplasm. The enzyme catalyses thymidine + ATP = dTMP + ADP + H(+). This is Thymidine kinase from Ureaplasma parvum serovar 3 (strain ATCC 27815 / 27 / NCTC 11736).